Here is a 464-residue protein sequence, read N- to C-terminus: Protein FAM90A5 (464 aa).

3 disordered regions span residues arginine 16–leucine 42, proline 70–alanine 389, and histidine 415–proline 437. Basic and acidic residues-rich tracts occupy residues glycine 74–valine 89 and asparagine 97–arginine 114. Over residues leucine 180–leucine 197 the composition is skewed to low complexity.

This sequence belongs to the FAM90 family.

This is Protein FAM90A5 from Homo sapiens (Human).